Reading from the N-terminus, the 223-residue chain is von Willebrand factor C domain-containing protein 2-like (223 aa).

A signal peptide spans Met-1–Pro-21. 2 VWFC domains span residues Lys-51–Lys-110 and Asn-114–Lys-172.

It is found in the secreted. The protein localises to the synapse. May play a role in bone differentiation and matrix mineralization. May play a role in neural development. The protein is von Willebrand factor C domain-containing protein 2-like (vwc2l) of Danio rerio (Zebrafish).